A 300-amino-acid polypeptide reads, in one-letter code: U1 small nuclear ribonucleoprotein 70 kDa homolog (300 aa).

Residues 107–198 enclose the RRM domain; the sequence is RTIFIGRLPY…RTVKYFKPRR (92 aa). Disordered regions lie at residues 204-248 and 263-300; these read GGRG…AYSA and NRPL…APDY. Over residues 265 to 279 the composition is skewed to low complexity; that stretch reads PLLSAATPTAAVTSV.

As to quaternary structure, component of the spliceosome, where it is associated with snRNP U1. Binds stem loop I of U1 snRNA. Interacts with mRNA.

It localises to the nucleus. Involved in nuclear mRNA splicing. This Saccharomyces cerevisiae (strain ATCC 204508 / S288c) (Baker's yeast) protein is U1 small nuclear ribonucleoprotein 70 kDa homolog (SNP1).